Consider the following 227-residue polypeptide: E3 ubiquitin-protein ligase ZNRF1 (227 aa).

A disordered region spans residues 1–38 (MGGKQSTAARSRGPFPGVSTDDSAVPPPGGAPHFGHYR). Residue Gly2 is the site of N-myristoyl glycine attachment. The interval 2–10 (GGKQSTAAR) is required for endosomal and lysosomal localization and myristoylation. Phosphoserine is present on residues Ser50, Ser52, and Ser53. The tract at residues 77-105 (RGAGDAERAPGSGGSASDSTYAHGNGYQE) is disordered. The residue at position 103 (Tyr103) is a Phosphotyrosine. Position 123 is a phosphoserine (Ser123). Residues 184–225 (CVICLEELLQGDTIARLPCLCIYHKSCIDSWFEVNRSCPEHP) form an RING-type; atypical zinc finger.

In terms of assembly, interacts with AKT1, GLUL and TUBB2A. Interacts with ZNRF2. Interacts (via its RING domain) with UBE2N. Interacts (when phosphorylated) with YWHAE. In terms of processing, N-myristoylation targets ZNRF1 to intracellular membranes. Post-translationally, phosphorylated by SRC at Tyr-103; leading to 'Lys-63'-linked ubiquitination of TLR3, lysosomal trafficking and degradation.

Its subcellular location is the endosome. It localises to the lysosome. It is found in the membrane. The protein resides in the cytoplasmic vesicle. The protein localises to the secretory vesicle. Its subcellular location is the synaptic vesicle membrane. The enzyme catalyses S-ubiquitinyl-[E2 ubiquitin-conjugating enzyme]-L-cysteine + [acceptor protein]-L-lysine = [E2 ubiquitin-conjugating enzyme]-L-cysteine + N(6)-ubiquitinyl-[acceptor protein]-L-lysine.. The protein operates within protein modification; protein ubiquitination. Its function is as follows. E3 ubiquitin-protein ligase that plays a role in different processes including cell differentiation, receptor recycling or regulation of inflammation. Mediates the ubiquitination of AKT1 and GLUL, thereby playing a role in neuron cells differentiation. Plays a role in the establishment and maintenance of neuronal transmission and plasticity. Regulates Schwann cells differentiation by mediating ubiquitination of GLUL. Promotes neurodegeneration by mediating 'Lys-48'-linked polyubiquitination and subsequent degradation of AKT1 in axons: degradation of AKT1 prevents AKT1-mediated phosphorylation of GSK3B, leading to GSK3B activation and phosphorylation of DPYSL2/CRMP2 followed by destabilization of microtubule assembly in axons. Ubiquitinates the Na(+)/K(+) ATPase alpha-1 subunit/ATP1A1 and thereby influences its endocytosis and/or degradation. Controls ligand-induced EGFR signaling via mediating receptor ubiquitination and recruitment of the ESCRT machinery. Acts as a negative feedback mechanism controlling TLR3 trafficking by mediating TLR3 'Lys-63'-linked polyubiquitination to reduce type I IFN production. Modulates inflammation by promoting caveolin-1/CAV1 ubiquitination and degradation to regulate TLR4-activated immune response. In Bos taurus (Bovine), this protein is E3 ubiquitin-protein ligase ZNRF1 (ZNRF1).